The sequence spans 283 residues: Orotidine 5'-phosphate decarboxylase (283 aa).

Residue lysine 97 is the Proton donor of the active site.

Belongs to the OMP decarboxylase family. Type 2 subfamily.

The enzyme catalyses orotidine 5'-phosphate + H(+) = UMP + CO2. Its pathway is pyrimidine metabolism; UMP biosynthesis via de novo pathway; UMP from orotate: step 2/2. The sequence is that of Orotidine 5'-phosphate decarboxylase from Clostridium botulinum (strain Loch Maree / Type A3).